Reading from the N-terminus, the 220-residue chain is NADH-quinone oxidoreductase subunit I (220 aa).

4Fe-4S ferredoxin-type domains follow at residues 71–102 (LQRL…IITH) and 112–141 (DSYT…MGNR). C82, C85, C88, C92, C121, C124, C127, and C131 together coordinate [4Fe-4S] cluster. The segment at 187–220 (MQATPLDYVQEPSKEESQEETPTNPESNKGDENV) is disordered.

The protein belongs to the complex I 23 kDa subunit family. As to quaternary structure, NDH-1 is composed of 14 different subunits. Subunits NuoA, H, J, K, L, M, N constitute the membrane sector of the complex. Requires [4Fe-4S] cluster as cofactor.

It is found in the cell inner membrane. It carries out the reaction a quinone + NADH + 5 H(+)(in) = a quinol + NAD(+) + 4 H(+)(out). In terms of biological role, NDH-1 shuttles electrons from NADH, via FMN and iron-sulfur (Fe-S) centers, to quinones in the respiratory chain. The immediate electron acceptor for the enzyme in this species is believed to be ubiquinone. Couples the redox reaction to proton translocation (for every two electrons transferred, four hydrogen ions are translocated across the cytoplasmic membrane), and thus conserves the redox energy in a proton gradient. The polypeptide is NADH-quinone oxidoreductase subunit I (Helicobacter pylori (strain ATCC 700392 / 26695) (Campylobacter pylori)).